Consider the following 194-residue polypeptide: Histone H1 (194 aa).

Alanine 1 is subject to N-acetylalanine; partial. Low complexity predominate over residues alanine 1–lysine 14. 2 disordered regions span residues alanine 1–valine 31 and alanine 105–lysine 194. Over residues alanine 15–lysine 26 the composition is skewed to basic residues. The 74-residue stretch at serine 27–lysine 100 folds into the H15 domain. Positions lysine 116–lysine 194 are enriched in basic residues. Serine 145, serine 161, and serine 182 each carry phosphoserine.

It belongs to the histone H1/H5 family.

It is found in the nucleus. The protein resides in the chromosome. Histones H1 are necessary for the condensation of nucleosome chains into higher-order structures. This is Histone H1 from Salmo trutta (Brown trout).